We begin with the raw amino-acid sequence, 265 residues long: HUWE1-associated protein modifying stress responses (265 aa).

4 disordered regions span residues 1–22 (MEDKKEEGESEIQEHGPEHWFS), 145–170 (RNSRAPPRLTVVSPNRATPTETGSSV), 195–218 (VRSSTPGSPTHVSGSSNTGRRRNG), and 240–265 (GTRKRSSAQCGDVITDSPTHKRNRMI). 2 stretches are compositionally biased toward polar residues: residues 156-170 (VSPNRATPTETGSSV) and 195-212 (VRSSTPGSPTHVSGSSNT).

The protein belongs to the TAPR1 family. As to quaternary structure, oligomer.

It localises to the nucleus. The protein resides in the cytoplasm. Functionally, acts as a central player within a network of stress response pathways promoting cellular adaptability. Functions as a negative regulator of TP53/P53 in the cellular response to telomere erosion and probably also DNA damage. The sequence is that of HUWE1-associated protein modifying stress responses from Xenopus laevis (African clawed frog).